Reading from the N-terminus, the 215-residue chain is Probable nicotinate-nucleotide adenylyltransferase (215 aa).

Belongs to the NadD family.

The catalysed reaction is nicotinate beta-D-ribonucleotide + ATP + H(+) = deamido-NAD(+) + diphosphate. It participates in cofactor biosynthesis; NAD(+) biosynthesis; deamido-NAD(+) from nicotinate D-ribonucleotide: step 1/1. Catalyzes the reversible adenylation of nicotinate mononucleotide (NaMN) to nicotinic acid adenine dinucleotide (NaAD). This Shewanella sp. (strain W3-18-1) protein is Probable nicotinate-nucleotide adenylyltransferase.